We begin with the raw amino-acid sequence, 76 residues long: Defensin-like protein 163 (76 aa).

Residues 1 to 27 (MAKLIYSYLFISMFVLSVLLALPNAEG) form the signal peptide. Intrachain disulfides connect Cys-33–Cys-76, Cys-43–Cys-62, Cys-48–Cys-70, and Cys-52–Cys-72.

It belongs to the DEFL family.

It localises to the secreted. This is Defensin-like protein 163 (LCR24) from Arabidopsis thaliana (Mouse-ear cress).